A 429-amino-acid chain; its full sequence is Adenylosuccinate synthetase (429 aa).

Residues 12-18 and 40-42 contribute to the GTP site; these read GDEGKGK and GHT. Catalysis depends on D13, which acts as the Proton acceptor. Mg(2+) contacts are provided by D13 and G40. Residues 13–16, 38–41, T129, R143, Q223, T238, and R302 contribute to the IMP site; these read DEGK and NAGH. H41 acts as the Proton donor in catalysis. Residue 298–304 coordinates substrate; the sequence is TVTGRPR. GTP contacts are provided by residues R304, 330-332, and 412-414; these read KLD and STS.

The protein belongs to the adenylosuccinate synthetase family. In terms of assembly, homodimer. Mg(2+) serves as cofactor.

It localises to the cytoplasm. The catalysed reaction is IMP + L-aspartate + GTP = N(6)-(1,2-dicarboxyethyl)-AMP + GDP + phosphate + 2 H(+). Its pathway is purine metabolism; AMP biosynthesis via de novo pathway; AMP from IMP: step 1/2. Plays an important role in the de novo pathway of purine nucleotide biosynthesis. Catalyzes the first committed step in the biosynthesis of AMP from IMP. The sequence is that of Adenylosuccinate synthetase from Paramagnetospirillum magneticum (strain ATCC 700264 / AMB-1) (Magnetospirillum magneticum).